The following is a 264-amino-acid chain: tRNA (guanine-N(1)-)-methyltransferase (264 aa).

S-adenosyl-L-methionine is bound at residue 149–154 (IGDYVL).

This sequence belongs to the RNA methyltransferase TrmD family. As to quaternary structure, homodimer.

It localises to the cytoplasm. It catalyses the reaction guanosine(37) in tRNA + S-adenosyl-L-methionine = N(1)-methylguanosine(37) in tRNA + S-adenosyl-L-homocysteine + H(+). In terms of biological role, specifically methylates guanosine-37 in various tRNAs. The chain is tRNA (guanine-N(1)-)-methyltransferase from Methylobacillus flagellatus (strain ATCC 51484 / DSM 6875 / VKM B-1610 / KT).